A 161-amino-acid chain; its full sequence is Probable ribosome biogenesis protein RLP24 (161 aa).

It belongs to the eukaryotic ribosomal protein eL24 family. As to quaternary structure, associated with nucleolar and cytoplasmic pre-60S particles. At the end of biogenesis it dissociates from cytoplasmic pre-60S particles and is likely to be exchanged for its ribosomal homolog, RPL24.

Its subcellular location is the nucleus. The protein resides in the nucleolus. In terms of biological role, involved in the biogenesis of the 60S ribosomal subunit. Ensures the docking of GTPBP4/NOG1 to pre-60S particles. The polypeptide is Probable ribosome biogenesis protein RLP24 (rsl24d1) (Danio rerio (Zebrafish)).